Consider the following 541-residue polypeptide: Carboxypeptidase Y homolog A (541 aa).

A signal peptide spans 1–17 (MKVATSALLIGAAAAQQ). Residues 18–125 (QQILKFPDSF…KLEQYSLRAK (108 aa)) constitute a propeptide that is removed on maturation. 5 disulfide bridges follow: Cys-179–Cys-418, Cys-313–Cys-327, Cys-337–Cys-360, Cys-344–Cys-353, and Cys-382–Cys-388. Residue Asn-210 is glycosylated (N-linked (GlcNAc...) asparagine). Residue Ser-266 is part of the active site. Asp-457 is an active-site residue. N-linked (GlcNAc...) asparagine glycosylation occurs at Asn-505. Residue His-516 is part of the active site.

The protein belongs to the peptidase S10 family.

The protein localises to the vacuole. The enzyme catalyses Release of a C-terminal amino acid with broad specificity.. Its function is as follows. Vacuolar carboxypeptidase involved in degradation of small peptides. Digests preferentially peptides containing an aliphatic or hydrophobic residue in P1' position, as well as methionine, leucine or phenylalanine in P1 position of ester substrate. This chain is Carboxypeptidase Y homolog A (cpyA), found in Pyrenophora tritici-repentis (strain Pt-1C-BFP) (Wheat tan spot fungus).